Reading from the N-terminus, the 167-residue chain is Alpha-crystallin A chain (167 aa).

M1 is modified (N-acetylmethionine). Residues 47–158 form the sHSP domain; the sequence is YYRQSFFRGF…GERPIPVSRE (112 aa). Positions 94, 96, 101, and 148 each coordinate Zn(2+). Positions 143–167 are disordered; that stretch reads SLDSSHGERPIPVSREEKPTSAPSS. Residues 147–161 show a composition bias toward basic and acidic residues; sequence SHGERPIPVSREEKP. An O-linked (GlcNAc) serine glycan is attached at S156.

This sequence belongs to the small heat shock protein (HSP20) family. Heteropolymer composed of three CRYAA and one CRYAB subunits. Inter-subunit bridging via zinc ions enhances stability, which is crucial as there is no protein turn over in the lens. Can also form homodimers and homotetramers (dimers of dimers) which serve as the building blocks of homooligomers. Within homooligomers, the zinc-binding motif is created from residues of 3 different molecules. His-94 and Glu-96 from one molecule are ligands of the zinc ion, and His-101 and His-148 residues from additional molecules complete the site with tetrahedral coordination geometry.

It is found in the cytoplasm. The protein resides in the nucleus. Its function is as follows. Contributes to the transparency and refractive index of the lens. May act as a chaperone, preventing aggregation of various proteins under a wide range of stress conditions. This is Alpha-crystallin A chain (CRYAA) from Pelophylax lessonae (Pool frog).